Here is a 215-residue protein sequence, read N- to C-terminus: Large ribosomal subunit protein uL3 (215 aa).

Q156 carries the post-translational modification N5-methylglutamine.

The protein belongs to the universal ribosomal protein uL3 family. Part of the 50S ribosomal subunit. Forms a cluster with proteins L14 and L19. Post-translationally, methylated by PrmB.

One of the primary rRNA binding proteins, it binds directly near the 3'-end of the 23S rRNA, where it nucleates assembly of the 50S subunit. The protein is Large ribosomal subunit protein uL3 of Xylella fastidiosa (strain 9a5c).